A 157-amino-acid chain; its full sequence is Transcription elongation factor GreB (157 aa).

This sequence belongs to the GreA/GreB family. GreB subfamily.

Its function is as follows. Necessary for efficient RNA polymerase transcription elongation past template-encoded arresting sites. The arresting sites in DNA have the property of trapping a certain fraction of elongating RNA polymerases that pass through, resulting in locked ternary complexes. Cleavage of the nascent transcript by cleavage factors such as GreA or GreB allows the resumption of elongation from the new 3'terminus. GreB releases sequences of up to 9 nucleotides in length. This chain is Transcription elongation factor GreB, found in Salmonella typhimurium (strain LT2 / SGSC1412 / ATCC 700720).